Reading from the N-terminus, the 89-residue chain is MKEIVIWPAYFDLKRTKNEGRKVPKSFGVLNPKLKDIVSIIEKMGHEYSIDNKKSYPKEPWEICGYLKVTIDEKTSKLDFLKELCKRMK.

This sequence belongs to the SRP19 family. As to quaternary structure, part of the signal recognition particle protein translocation system, which is composed of SRP and FtsY. Archaeal SRP consists of a 7S RNA molecule of 300 nucleotides and two protein subunits: SRP54 and SRP19.

The protein resides in the cytoplasm. Functionally, involved in targeting and insertion of nascent membrane proteins into the cytoplasmic membrane. Binds directly to 7S RNA and mediates binding of the 54 kDa subunit of the SRP. The protein is Signal recognition particle 19 kDa protein of Methanococcus vannielii (strain ATCC 35089 / DSM 1224 / JCM 13029 / OCM 148 / SB).